The sequence spans 183 residues: Probable calcium-binding protein CML47 (183 aa).

EF-hand domains lie at 112–147 (MGKE…LGYD) and 149–183 (CTKM…KSFS). Positions 125, 127, 129, 136, 162, 164, 166, 168, and 173 each coordinate Ca(2+).

Potential calcium sensor. The protein is Probable calcium-binding protein CML47 (CML47) of Arabidopsis thaliana (Mouse-ear cress).